We begin with the raw amino-acid sequence, 812 residues long: Ribonucleoside-diphosphate reductase large subunit (812 aa).

Residues 12-103 (LYVIKRDGRQ…VSNLHKETKK (92 aa)) form the ATP-cone domain. ATP is bound by residues 16–17 (KR), 22–28 (EEVHFDK), Thr64, and Asp68. GDP is bound by residues Ser213 and Ser228. A disulfide bond links Cys229 and Cys455. DTTP is bound by residues 237–239 (DSI), Lys254, Arg267, and 274–275 (CG). A GDP-binding site is contributed by Asn438. The active-site Proton acceptor is Asn438. Cys440 functions as the Cysteine radical intermediate in the catalytic mechanism. GDP-binding positions include Glu442 and 615–618 (TAST). The Proton acceptor role is filled by Glu442. Thr778 carries the phosphothreonine modification. At Ser782 the chain carries Phosphoserine. Tyr786 is subject to Phosphotyrosine.

This sequence belongs to the ribonucleoside diphosphate reductase large chain family. As to quaternary structure, heterodimer of a large and a small subunit.

The catalysed reaction is a 2'-deoxyribonucleoside 5'-diphosphate + [thioredoxin]-disulfide + H2O = a ribonucleoside 5'-diphosphate + [thioredoxin]-dithiol. With respect to regulation, under complex allosteric control mediated by deoxynucleoside triphosphates and ATP binding to separate specificity and activation sites on the M1 subunit. The type of nucleotide bound at the specificity site determines substrate preference. It seems probable that ATP makes the enzyme reduce CDP and UDP, dGTP favors ADP reduction and dTTP favors GDP reduction. Stimulated by ATP and inhibited by dATP binding to the activity site. Functionally, provides the precursors necessary for DNA synthesis. Catalyzes the biosynthesis of deoxyribonucleotides from the corresponding ribonucleotides. In Drosophila melanogaster (Fruit fly), this protein is Ribonucleoside-diphosphate reductase large subunit (RnrL).